Reading from the N-terminus, the 88-residue chain is Small ribosomal subunit protein bS20 (88 aa).

A disordered region spans residues 1–25; sequence MANSAQARKRARQATKARAHNASLR. Basic residues predominate over residues 7-19; it reads ARKRARQATKARA.

It belongs to the bacterial ribosomal protein bS20 family.

In terms of biological role, binds directly to 16S ribosomal RNA. The protein is Small ribosomal subunit protein bS20 of Azoarcus sp. (strain BH72).